The following is a 443-amino-acid chain: ATP-dependent protease ATPase subunit HslU (443 aa).

Residues Ile-18, 60 to 65 (GVGKTE), Asp-256, Glu-321, and Arg-393 each bind ATP.

This sequence belongs to the ClpX chaperone family. HslU subfamily. As to quaternary structure, a double ring-shaped homohexamer of HslV is capped on each side by a ring-shaped HslU homohexamer. The assembly of the HslU/HslV complex is dependent on binding of ATP.

It is found in the cytoplasm. In terms of biological role, ATPase subunit of a proteasome-like degradation complex; this subunit has chaperone activity. The binding of ATP and its subsequent hydrolysis by HslU are essential for unfolding of protein substrates subsequently hydrolyzed by HslV. HslU recognizes the N-terminal part of its protein substrates and unfolds these before they are guided to HslV for hydrolysis. In Salmonella agona (strain SL483), this protein is ATP-dependent protease ATPase subunit HslU.